A 64-amino-acid polypeptide reads, in one-letter code: Large ribosomal subunit protein uL29 (64 aa).

This sequence belongs to the universal ribosomal protein uL29 family.

The chain is Large ribosomal subunit protein uL29 from Polynucleobacter necessarius subsp. necessarius (strain STIR1).